Reading from the N-terminus, the 310-residue chain is Homoserine kinase (310 aa).

An ATP-binding site is contributed by 91 to 101 (PIGSGLGSSAC).

It belongs to the GHMP kinase family. Homoserine kinase subfamily.

It is found in the cytoplasm. The catalysed reaction is L-homoserine + ATP = O-phospho-L-homoserine + ADP + H(+). It participates in amino-acid biosynthesis; L-threonine biosynthesis; L-threonine from L-aspartate: step 4/5. Functionally, catalyzes the ATP-dependent phosphorylation of L-homoserine to L-homoserine phosphate. The protein is Homoserine kinase of Escherichia coli (strain SMS-3-5 / SECEC).